We begin with the raw amino-acid sequence, 244 residues long: Phosphoadenosine 5'-phosphosulfate reductase (244 aa).

Cys239 functions as the Nucleophile; cysteine thiosulfonate intermediate in the catalytic mechanism.

Belongs to the PAPS reductase family. CysH subfamily.

The protein resides in the cytoplasm. It catalyses the reaction [thioredoxin]-disulfide + sulfite + adenosine 3',5'-bisphosphate + 2 H(+) = [thioredoxin]-dithiol + 3'-phosphoadenylyl sulfate. It participates in sulfur metabolism; hydrogen sulfide biosynthesis; sulfite from sulfate: step 3/3. Functionally, catalyzes the formation of sulfite from phosphoadenosine 5'-phosphosulfate (PAPS) using thioredoxin as an electron donor. The chain is Phosphoadenosine 5'-phosphosulfate reductase from Buchnera aphidicola subsp. Acyrthosiphon pisum (strain Tuc7).